Consider the following 426-residue polypeptide: Enolase (426 aa).

Residue glutamine 165 participates in (2R)-2-phosphoglycerate binding. Catalysis depends on glutamate 207, which acts as the Proton donor. Mg(2+) contacts are provided by aspartate 244, glutamate 285, and aspartate 312. Residues lysine 337, arginine 366, serine 367, and lysine 388 each coordinate (2R)-2-phosphoglycerate. Lysine 337 functions as the Proton acceptor in the catalytic mechanism.

It belongs to the enolase family. It depends on Mg(2+) as a cofactor.

Its subcellular location is the cytoplasm. The protein localises to the secreted. The protein resides in the cell surface. It catalyses the reaction (2R)-2-phosphoglycerate = phosphoenolpyruvate + H2O. The protein operates within carbohydrate degradation; glycolysis; pyruvate from D-glyceraldehyde 3-phosphate: step 4/5. Catalyzes the reversible conversion of 2-phosphoglycerate (2-PG) into phosphoenolpyruvate (PEP). It is essential for the degradation of carbohydrates via glycolysis. The chain is Enolase from Cyanothece sp. (strain PCC 7425 / ATCC 29141).